Here is a 245-residue protein sequence, read N- to C-terminus: DNA polymerase sliding clamp 2 (245 aa).

This sequence belongs to the PCNA family. Homotrimer. The subunits circularize to form a toroid; DNA passes through its center. Replication factor C (RFC) is required to load the toroid on the DNA.

In terms of biological role, sliding clamp subunit that acts as a moving platform for DNA processing. Responsible for tethering the catalytic subunit of DNA polymerase and other proteins to DNA during high-speed replication. This is DNA polymerase sliding clamp 2 from Sulfolobus acidocaldarius (strain ATCC 33909 / DSM 639 / JCM 8929 / NBRC 15157 / NCIMB 11770).